A 438-amino-acid polypeptide reads, in one-letter code: DEAD-box ATP-dependent RNA helicase 58, chloroplastic (438 aa).

The N-terminal 44 residues, 1-44 (MAAFSGCASPLSTTLRSGLAPFTLRHRLRLRRLRASAATLREVC), are a transit peptide targeting the chloroplast. A Q motif motif is present at residues 41-69 (REVCAGRVPEHVLQRAEEVGYVVPTEVQE). Residues 72–245 (LPVLLSGQDC…DCVQHKWTKT (174 aa)) enclose the Helicase ATP-binding domain. 85–92 (AQTGSGKT) contributes to the ATP binding site. Positions 190–193 (DEVD) match the DEAD box motif. The Helicase C-terminal domain maps to 274–436 (RLHVLLSLLE…ELPVESMFAF (163 aa)).

It belongs to the DEAD box helicase family.

It localises to the plastid. It is found in the chloroplast. The enzyme catalyses ATP + H2O = ADP + phosphate + H(+). This is DEAD-box ATP-dependent RNA helicase 58, chloroplastic from Oryza sativa subsp. japonica (Rice).